A 449-amino-acid polypeptide reads, in one-letter code: Gamma-aminobutyric acid receptor subunit delta (449 aa).

The signal sequence occupies residues 1 to 24; it reads MDVLGWLLLPLLLLCTQPHHGARA. At 25 to 251 the chain is on the extracellular side; that stretch reads MNDIGDYVGS…QLRRNRGVYI (227 aa). 2 N-linked (GlcNAc...) asparagine glycosylation sites follow: N103 and N106. An intrachain disulfide couples C164 to C178. The helical transmembrane segment at 252–271 threads the bilayer; that stretch reads IQSYMPSVLLVAMSWVSFWI. Residues 272-275 lie on the Cytoplasmic side of the membrane; sequence SQAA. A helical membrane pass occupies residues 276 to 298; the sequence is VPARVSLGITTVLTMTTLMVSAR. Residues 299-308 lie on the Extracellular side of the membrane; it reads SSLPRASAIK. A helical membrane pass occupies residues 309-331; that stretch reads ALDVYFWICYVFVFAALVEYAFA. Over 332–423 the chain is Cytoplasmic; the sequence is HFNADYRKKR…SRLKPIDADT (92 aa). S390 is subject to Phosphoserine. Residues 424–446 traverse the membrane as a helical segment; sequence IDIYARAVFPAAFAAVNIIYWAA. Topologically, residues 447 to 449 are extracellular; that stretch reads YTM.

This sequence belongs to the ligand-gated ion channel (TC 1.A.9) family. Gamma-aminobutyric acid receptor (TC 1.A.9.5) subfamily. GABRD sub-subfamily. In terms of assembly, heteropentamer, formed by a combination of alpha (GABRA1-6), beta (GABRB1-3), gamma (GABRG1-3), delta (GABRD), epsilon (GABRE), rho (GABRR1-3), pi (GABRP) and theta (GABRQ) chains, each subunit exhibiting distinct physiological and pharmacological properties. Found in the brain, in cerebellar granule cells. Expressed in lungs, in alveolar epithelium.

It is found in the cell membrane. It carries out the reaction chloride(in) = chloride(out). Functionally, delta subunit of the heteropentameric ligand-gated chloride channel gated by gamma-aminobutyric acid (GABA), a major inhibitory neurotransmitter in the brain. GABA-gated chloride channels, also named GABA(A) receptors (GABAAR), consist of five subunits arranged around a central pore and contain GABA active binding site(s) located at the alpha and beta subunit interface(s). When activated by GABA, GABAARs selectively allow the flow of chloride anions across the cell membrane down their electrochemical gradient. GABAARs containing delta/GABRD subunits are predominantly expressed and located in extrasynaptic or perisynaptic positions on hippocampus and cerebellar granule cells, and contribute to the tonic GABAergic inhibition. GABAAR containing alpha-4-beta-3-delta subunits can simultaneously bind GABA and histamine where histamine binds at the interface of two neighboring beta subunits, which may be involved in the regulation of sleep and wakefulness. The chain is Gamma-aminobutyric acid receptor subunit delta from Rattus norvegicus (Rat).